The chain runs to 217 residues: Thymidylate kinase (217 aa).

7-14 is a binding site for ATP; the sequence is GIDGAGKS.

It belongs to the thymidylate kinase family.

The catalysed reaction is dTMP + ATP = dTDP + ADP. In terms of biological role, phosphorylation of dTMP to form dTDP in both de novo and salvage pathways of dTTP synthesis. This is Thymidylate kinase from Pelodictyon phaeoclathratiforme (strain DSM 5477 / BU-1).